We begin with the raw amino-acid sequence, 367 residues long: Chorismate synthase (367 aa).

R48 lines the NADP(+) pocket. FMN is bound by residues 125–127, 243–244, G283, 298–302, and R324; these read RSS, NA, and KPTSS.

Belongs to the chorismate synthase family. In terms of assembly, homotetramer. FMNH2 is required as a cofactor.

It carries out the reaction 5-O-(1-carboxyvinyl)-3-phosphoshikimate = chorismate + phosphate. It functions in the pathway metabolic intermediate biosynthesis; chorismate biosynthesis; chorismate from D-erythrose 4-phosphate and phosphoenolpyruvate: step 7/7. Its function is as follows. Catalyzes the anti-1,4-elimination of the C-3 phosphate and the C-6 proR hydrogen from 5-enolpyruvylshikimate-3-phosphate (EPSP) to yield chorismate, which is the branch point compound that serves as the starting substrate for the three terminal pathways of aromatic amino acid biosynthesis. This reaction introduces a second double bond into the aromatic ring system. This chain is Chorismate synthase, found in Psychrobacter cryohalolentis (strain ATCC BAA-1226 / DSM 17306 / VKM B-2378 / K5).